The primary structure comprises 347 residues: Oocyte-specific homeobox protein 6 (347 aa).

Disordered stretches follow at residues 1–20 (MLQY…HSKF) and 54–86 (PRSP…IQMQ). Residues 72 to 85 (QESQGPSGKSSIQM) are compositionally biased toward polar residues. Positions 145–204 (HRKIRTVYTEEQKCVLKKHFHKCTYPSREQRMALAVLVGVTANEIQIWFKNHRAKSKRES) form a DNA-binding region, homeobox.

This sequence belongs to the paired homeobox family. Obox subfamily. Specifically expressed in early embryos.

The protein resides in the nucleus. Transcription factor required for zygotic genome activation (ZGA), a critical event in early embryonic development during which the developmental control passes from maternally provided mRNAs to the expression of the zygotic genome after fertilization. This chain is Oocyte-specific homeobox protein 6, found in Mus musculus (Mouse).